A 30-amino-acid polypeptide reads, in one-letter code: Propionyl-CoA carboxylase alpha chain (30 aa).

The Biotin carboxylation domain occupies 1 to 30 (PKIRKVLVANRGEIAIRVMRTXKELGIATV).

Dodecamer composed of six biotin-containing alpha subunits and six beta subunits. Mg(2+) serves as cofactor. Mn(2+) is required as a cofactor. It depends on biotin as a cofactor.

It catalyses the reaction propanoyl-CoA + hydrogencarbonate + ATP = (S)-methylmalonyl-CoA + ADP + phosphate + H(+). The protein operates within metabolic intermediate metabolism; propanoyl-CoA degradation; succinyl-CoA from propanoyl-CoA: step 1/3. Functionally, this is one of the 2 subunits of the biotin-dependent propionyl-CoA carboxylase (PCC), the enzyme catalyzing the carboxylation of propionyl-CoA/propanoyl-CoA to D-methylmalonyl-CoA/(S)-methylmalonyl-CoA. Within the holoenzyme, the alpha subunit catalyzes the ATP-dependent carboxylation of the biotin carried by the biotin carboxyl carrier (BCC) domain, while the beta subunit then transfers the carboxyl group from carboxylated biotin to propionyl-CoA. Propionyl-CoA carboxylase also carboxylates acetyl-CoA, butyryl-CoA and succinyl-CoA. The chain is Propionyl-CoA carboxylase alpha chain from Myxococcus xanthus.